Consider the following 214-residue polypeptide: MKLLILTCLVAVALARPKQPIKHQGLPQGVLNENLLRFFVAPFPEVFGKEKVNELSTDIGSESTEDQAMEDIKQMEAESISSSEEIVPISVEQKHIQKEDVPSERYLGYLEQLLRLKKYNVPQLEIVPNLAEEQLHSMKEGIHAQQKEPMIGVNQELAYFYPQLFRQFYQLDAYPSGAWYYVPLGTQYPDAPSFSDIPNPIGSENSGKTTMPLW.

Positions 1–15 are cleaved as a signal peptide; sequence MKLLILTCLVAVALA. Phosphoserine occurs at positions 63, 79, 81, 82, 83, and 90. Repeats lie at residues 85–99 and 125–140; these read EIVP…IQKE and EIVP…SMKE.

This sequence belongs to the alpha-casein family. As to expression, mammary gland specific. Secreted in milk.

The protein localises to the secreted. Important role in the capacity of milk to transport calcium phosphate. In Bubalus bubalis (Domestic water buffalo), this protein is Alpha-S1-casein (CSN1S1).